Reading from the N-terminus, the 492-residue chain is Glutamyl-tRNA(Gln) amidotransferase subunit A (492 aa).

Catalysis depends on charge relay system residues Lys79 and Ser154. Ser178 functions as the Acyl-ester intermediate in the catalytic mechanism.

The protein belongs to the amidase family. GatA subfamily. Heterotrimer of A, B and C subunits.

The enzyme catalyses L-glutamyl-tRNA(Gln) + L-glutamine + ATP + H2O = L-glutaminyl-tRNA(Gln) + L-glutamate + ADP + phosphate + H(+). Its function is as follows. Allows the formation of correctly charged Gln-tRNA(Gln) through the transamidation of misacylated Glu-tRNA(Gln) in organisms which lack glutaminyl-tRNA synthetase. The reaction takes place in the presence of glutamine and ATP through an activated gamma-phospho-Glu-tRNA(Gln). This is Glutamyl-tRNA(Gln) amidotransferase subunit A from Acinetobacter baumannii (strain AB0057).